Here is a 111-residue protein sequence, read N- to C-terminus: uncharacterized protein (111 aa).

The protein resides in the mitochondrion. This is an uncharacterized protein from Arabidopsis thaliana (Mouse-ear cress).